Reading from the N-terminus, the 451-residue chain is METNQILETIRMIEEEKLDIRTITMGISLLDCMDGDGEVARKKIYQKIVTKARNLVAVGEAIESEFGIPIINKRISVTPIAIIAGSSADTDYVEFAKTLDAAAKEVGVNFIGGYSALVQKGYTKGDEILIRSIPQALAQTERVCSSVNVGSTRTGINMDAVRQMGEVIKETADLTADTQGLGCAKLVVFANAVEDNPFMAGAFHGVGEADCVINVGVSGPGVVKRAIEKVKGEPFDIVAETVKQTAFKITRMGQLVGQVASEKLGVPFGIVDLSLAPTPAIGDSVAHILEEMGLEMVGTHGTTAALALLNDAVKKGGVMACGHVGGLSGAFIPVSEDAGMIEAVQQGALNLEKLEAMTAICSVGLDMIAVPGDTTAETLAAMIADEAAIGVINNKTTAVRVIPASGTKVGDMVEFGGLLGTAPVMPVNGKSSASFIARGGRIPAPIHSFKN.

Belongs to the UPF0210 family. Homodimer.

The sequence is that of UPF0210 protein lin0538 from Listeria innocua serovar 6a (strain ATCC BAA-680 / CLIP 11262).